Reading from the N-terminus, the 511-residue chain is Cytochrome P450 monooxygenase esdpI (511 aa).

Residues 14–34 form a helical membrane-spanning segment; it reads VRAGLAIGVAILAIIVLFPGI. Cys453 lines the heme pocket.

The protein belongs to the cytochrome P450 family. It depends on heme as a cofactor.

It localises to the membrane. Its pathway is secondary metabolite biosynthesis; terpenoid biosynthesis. Functionally, cytochrome P450 monooxygenase; part of the cluster that mediates the biosynthesis of shearones, diterpenoid pyrones (DPs) which are structurally diverse meroterpenoids consisting of a diterpene linked by a pyrone, and which may exhibit a range of bioactivities. Whitin the pathway, esdpI takes part in the molecular scaffold modification via the hydroxylation at C-20 and can transform shearone C into shearone G. The molecular scaffold is commonly biosynthesized by a series of enzymes including the non-reducing polyketide synthase (NR-PKS) esdpA that generates an alpha-pyrone; the prenyltransferase esdpC that attaches a geranylgeranyl pyrophosphate (GGPP) produced by the GGPP synthase (GGPPS) esdpD onto the pyrone unit; the FAD-dependent monooxygenase esdpE that converts an olefin on the diterpene unit into an epoxide; and the terpene cyclase esdpB that catalyzes the cyclization reactions to give the molecular backbone shearone A. In the modification steps, esdpF oxidizes the hydroxy group to a ketone at C-3 and esdpG then attaches hydroxy groups at both C-11 and C-12. After that, esdpI hydroxylates at C-20 and esdpH hydroxylates at C-6'. The ether bridge is generated by nucleophilic attack of the hydroxy group at C-20 to the carbonyl carbon at C-3. EsdpH can also functions prior to esdpI. The different combinations of these modification enzymes lead to the production of diverse shearone derivatives, shearone I being the end product of the pathway. The alpha-ketoglutarate-dependent dioxygenase esdpJ seems not to be involved in this pathway. The chain is Cytochrome P450 monooxygenase esdpI from Penicillium shearii (Eupenicillium shearii).